Reading from the N-terminus, the 824-residue chain is DNA replication helicase (824 aa).

90–97 (GTAGAGKT) contacts ATP.

The protein belongs to the herpesviridae helicase family. In terms of assembly, associates with the primase and the primase-associated factor to form the helicase-primase complex.

Its subcellular location is the host nucleus. Functionally, component of the helicase/primase complex. Unwinds the DNA at the replication forks and generates single-stranded DNA for both leading and lagging strand synthesis. The primase synthesizes short RNA primers on the lagging strand that the polymerase elongates using dNTPs. Possesses helicase-like motifs and therefore may act as the helicase subunit of the complex. In Human herpesvirus 6B (strain Z29) (HHV-6 variant B), this protein is DNA replication helicase.